Reading from the N-terminus, the 82-residue chain is Teratocyte protein CftICK-IV (82 aa).

The N-terminal stretch at 1 to 21 (MAKILLTFIILTCLIVTITPA) is a signal peptide.

In terms of processing, contains 4 disulfide bonds. Abundantly expressed by teratocytes, which are extra-embryonic cells released by parasitoid wasps into their hosts during larval eclosion.

Its subcellular location is the secreted. This endoparasitoid wasp peptide has immununosuppressive and insecticidal activities. Suppress cellular immunity which is detectable as a reduction of hemocyte spread index in the host. In vivo, ingestion of this peptide moderately reduces leaf consumption of D.saccharalis, a permissive host for the lepidoptere C.flavipes. The polypeptide is Teratocyte protein CftICK-IV (Cotesia flavipes (Parasitic wasp)).